The sequence spans 202 residues: LexA repressor (202 aa).

Positions 29-49 (VREICTAVGLKSTSTVHSYLE) form a DNA-binding region, H-T-H motif. Active-site for autocatalytic cleavage activity residues include Ser-125 and Lys-162.

Belongs to the peptidase S24 family. Homodimer.

The enzyme catalyses Hydrolysis of Ala-|-Gly bond in repressor LexA.. Its function is as follows. Represses a number of genes involved in the response to DNA damage (SOS response), including recA and lexA. In the presence of single-stranded DNA, RecA interacts with LexA causing an autocatalytic cleavage which disrupts the DNA-binding part of LexA, leading to derepression of the SOS regulon and eventually DNA repair. This is LexA repressor from Clostridium kluyveri (strain NBRC 12016).